Consider the following 171-residue polypeptide: Lipoprotein signal peptidase (171 aa).

4 helical membrane-spanning segments follow: residues 15–35 (WLWL…IVMD), 47–67 (VLPF…SFLS), 72–92 (WQRW…AYWM), and 107–127 (ALII…GFVV). Residues D128 and D146 contribute to the active site. Residues 141-161 (AFNLADSTICIGAAMIILDGF) traverse the membrane as a helical segment.

It belongs to the peptidase A8 family.

The protein localises to the cell inner membrane. It carries out the reaction Release of signal peptides from bacterial membrane prolipoproteins. Hydrolyzes -Xaa-Yaa-Zaa-|-(S,diacylglyceryl)Cys-, in which Xaa is hydrophobic (preferably Leu), and Yaa (Ala or Ser) and Zaa (Gly or Ala) have small, neutral side chains.. It participates in protein modification; lipoprotein biosynthesis (signal peptide cleavage). Its function is as follows. This protein specifically catalyzes the removal of signal peptides from prolipoproteins. This is Lipoprotein signal peptidase from Vibrio cholerae serotype O1 (strain ATCC 39541 / Classical Ogawa 395 / O395).